Reading from the N-terminus, the 49-residue chain is Small, acid-soluble spore protein O (49 aa).

The tract at residues 24-49 (GYNEEFSNEPLTEAQRQNNKKRKKNQ) is disordered.

The protein belongs to the SspO family.

The protein resides in the spore core. The sequence is that of Small, acid-soluble spore protein O from Geobacillus kaustophilus (strain HTA426).